The chain runs to 432 residues: Negative regulator of systemic acquired resistance SNI1 (432 aa).

In terms of assembly, interacts with SSN2. Binds to NTL9/CBNAC to promote its binding to promoters of target genes. Component of the SMC5-SMC6 complex which consists at least of SMC5 and SMC6B. Interacts with RAD17. Expressed at low levels in the veins.

It localises to the nucleus. In terms of biological role, component of the SMC5-SMC6 complex, a complex involved in repair of DNA double-strand breaks by homologous recombination. Transcription repressor that prevents expression of pathogenesis-related genes (PR) via histone modifications and binding negative cis-acting elements at their promoters. Negative regulator of hypersensitive response (HR) and systemic acquired resistance (SAR) required to dampen the basal expression of pathogenesis related (PR) genes. Functions synergistically with NTL9/CBNAC as negative regulator of pathogen-induced PR1 expression and basal resistance to a virulent strain of P.syringae. Binds to the PR1 gene promoter to suppress defense response in the absence of pathogen challenge and is removed in response to induction. Negatively regulates both gene expression and DNA recombination during pathogen infection, thus being involved in short-term defense response and a long-term survival strategy. Prevents effective immune responses that involve activation of DNA damage responses, probably by negatively regulating the DNA damage sensors RAD17 and ATR. Negative regulator of defenses against the beet cyst nematode H.schachtii. This Arabidopsis thaliana (Mouse-ear cress) protein is Negative regulator of systemic acquired resistance SNI1.